The chain runs to 196 residues: UMP-CMP kinase (196 aa).

Position 13–18 (13–18 (GAGKGT)) interacts with ATP. Phosphoserine is present on Ser33. The NMP stretch occupies residues 33–63 (SAGELLRDERKNPDSQYGELIEKYIKEGKIV). Arg39 contributes to the a ribonucleoside 5'-phosphate binding site. Residues Lys43 and Lys55 each carry the N6-acetyllysine modification. Residue 61 to 63 (KIV) participates in a ribonucleoside 5'-phosphate binding. Lys73 is covalently cross-linked (Glycyl lysine isopeptide (Lys-Gly) (interchain with G-Cter in SUMO2)). A ribonucleoside 5'-phosphate is bound at residue 93–96 (GFPR). Asn100 contributes to the CMP binding site. Position 106 is an N6-succinyllysine (Lys106). Residues 133–143 (ERGKSSGRSDD) are LID. Arg134 serves as a coordination point for ATP. Residues Arg140 and Arg151 each coordinate a ribonucleoside 5'-phosphate. ATP is bound at residue Lys179. Phosphoserine is present on Ser180.

It belongs to the adenylate kinase family. UMP-CMP kinase subfamily. In terms of assembly, monomer. It depends on Mg(2+) as a cofactor.

The protein localises to the nucleus. The protein resides in the cytoplasm. The enzyme catalyses CMP + ATP = CDP + ADP. It carries out the reaction dCMP + ATP = dCDP + ADP. The catalysed reaction is UMP + ATP = UDP + ADP. It catalyses the reaction a 2'-deoxyribonucleoside 5'-diphosphate + ATP = a 2'-deoxyribonucleoside 5'-triphosphate + ADP. The enzyme catalyses a ribonucleoside 5'-diphosphate + ATP = a ribonucleoside 5'-triphosphate + ADP. Its function is as follows. Catalyzes the phosphorylation of pyrimidine nucleoside monophosphates at the expense of ATP. Plays an important role in de novo pyrimidine nucleotide biosynthesis. Has preference for UMP and CMP as phosphate acceptors. Also displays broad nucleoside diphosphate kinase activity. This chain is UMP-CMP kinase (Cmpk1), found in Rattus norvegicus (Rat).